Here is a 60-residue protein sequence, read N- to C-terminus: Phospholipase A2 (60 aa).

3 residues coordinate Ca(2+): Y27, G29, and G31. An intrachain disulfide couples C28 to C44. H47 is an active-site residue. D48 provides a ligand contact to Ca(2+).

It depends on Ca(2+) as a cofactor. Expressed by the venom gland.

The protein resides in the secreted. The catalysed reaction is a 1,2-diacyl-sn-glycero-3-phosphocholine + H2O = a 1-acyl-sn-glycero-3-phosphocholine + a fatty acid + H(+). Snake venom phospholipase A2 (PLA2) that displays mild but significant inhibition of mouse platelet aggregation induced by ADP and collagen. In vivo, induces edema in the foot pads and gastrocnemius muscles of mice but shows no myonecrotic or myotoxic activity. PA2 catalyzes the calcium-dependent hydrolysis of the 2-acyl groups in 3-sn-phosphoglycerides. The polypeptide is Phospholipase A2 (Lachesis muta rhombeata (Bushmaster)).